A 56-amino-acid polypeptide reads, in one-letter code: Per os infectivity factor AC110 (56 aa).

Functionally, plays an essential role in the process of oral infection. May participate in the crossing of occlusion-derived virions through the host peritrophic membrane during oral infection. The protein is Per os infectivity factor AC110 of Autographa californica nuclear polyhedrosis virus (AcMNPV).